A 208-amino-acid polypeptide reads, in one-letter code: Probable GTP-binding protein EngB (208 aa).

The EngB-type G domain occupies 23–205 (LTSEMVVLGR…RQTLLKYLLT (183 aa)). Residues 31 to 38 (GRSNVGKS), 57 to 61 (GKTRL), 84 to 87 (DLPG), 154 to 157 (TKFD), and 182 to 184 (FNA) each bind GTP. Mg(2+) contacts are provided by S38 and T59.

This sequence belongs to the TRAFAC class TrmE-Era-EngA-EngB-Septin-like GTPase superfamily. EngB GTPase family. It depends on Mg(2+) as a cofactor.

In terms of biological role, necessary for normal cell division and for the maintenance of normal septation. This Helicobacter acinonychis (strain Sheeba) protein is Probable GTP-binding protein EngB.